A 175-amino-acid chain; its full sequence is Large ribosomal subunit protein bL9 (175 aa).

It belongs to the bacterial ribosomal protein bL9 family.

In terms of biological role, binds to the 23S rRNA. This Orientia tsutsugamushi (strain Boryong) (Rickettsia tsutsugamushi) protein is Large ribosomal subunit protein bL9.